Consider the following 51-residue polypeptide: Large ribosomal subunit protein eL39 (51 aa).

The protein belongs to the eukaryotic ribosomal protein eL39 family.

The protein is Large ribosomal subunit protein eL39 of Methanopyrus kandleri (strain AV19 / DSM 6324 / JCM 9639 / NBRC 100938).